Here is an 834-residue protein sequence, read N- to C-terminus: Glycerol-3-phosphate acyltransferase (834 aa).

The HXXXXD motif motif lies at 309 to 314; it reads CHRSHI.

It belongs to the GPAT/DAPAT family.

Its subcellular location is the cell inner membrane. The catalysed reaction is sn-glycerol 3-phosphate + an acyl-CoA = a 1-acyl-sn-glycero-3-phosphate + CoA. It participates in phospholipid metabolism; CDP-diacylglycerol biosynthesis; CDP-diacylglycerol from sn-glycerol 3-phosphate: step 1/3. In Pseudomonas aeruginosa (strain LESB58), this protein is Glycerol-3-phosphate acyltransferase.